The primary structure comprises 146 residues: Angiogenin (146 aa).

The first 24 residues, 1 to 24, serve as a signal peptide directing secretion; sequence MVMGLGLFLLVFMLGLGLTPPTLA. The residue at position 25 (Q25) is a Pyrrolidone carboxylic acid. H37 serves as the catalytic Proton acceptor. Position 45 (R45) interacts with tRNA. 3 cysteine pairs are disulfide-bonded: C50–C105, C63–C116, and C81–C131. Positions 55–59 match the Nucleolar localization signal motif; the sequence is RRRHL. TRNA contacts are provided by C105 and I127. H138 (proton donor) is an active-site residue.

It belongs to the pancreatic ribonuclease family. Homodimer. Interacts with RNH1; inhibiting ANG ribonuclease activity. Interacts with PCNA.

The protein localises to the secreted. It is found in the nucleus. Its subcellular location is the nucleolus. It localises to the cytoplasm. The protein resides in the stress granule. With respect to regulation, has weak tRNA ribonuclease activity by itself due to partial autoinhibition by its C-terminus, which folds into a short alpha-helix that partially occludes the substrate-binding site. In absence of stress, the ribonuclease activity is inhibited by RNH1 in the cytoplasm. In response to stress, dissociates from RNH1 in the cytoplasm and associates with cytoplasmic ribosomes with vacant A-sites: ribosomes directly activate the tRNA ribonuclease activity of ANG by refolding the C-terminal alpha-helix. In response to stress, the angiogenic activity of ANG is inhibited by RNH1 in the nucleus. Its function is as follows. Secreted ribonuclease that can either promote or restrict cell proliferation of target cells, depending on the context. Endocytosed in target cells via its receptor PLXNB2 and translocates to the cytoplasm or nucleus. Under stress conditions, localizes to the cytoplasm and promotes the assembly of stress granules (SGs): specifically cleaves a subset of tRNAs within anticodon loops to produce tRNA-derived stress-induced fragments (tiRNAs), resulting in translation repression and inhibition of cell proliferation. tiRNas also prevent formation of apoptosome, thereby promoting cell survival. Preferentially cleaves RNAs between a pyrimidine and an adenosine residue, suggesting that it cleaves the anticodon loop of tRNA(Ala) (32-UUAGCAU-38) after positions 33 and 36. Cleaves a subset of tRNAs, including tRNA(Ala), tRNA(Glu), tRNA(Gly), tRNA(Lys), tRNA(Val), tRNA(His), tRNA(Asp) and tRNA(Sec). Under growth conditions and in differentiated cells, translocates to the nucleus and stimulates ribosomal RNA (rRNA) transcription, including that containing the initiation site sequences of 45S rRNA, thereby promoting cell growth and proliferation. Angiogenin induces vascularization of normal and malignant tissues via its ability to promote rRNA transcription. Involved in hematopoietic stem and progenitor cell (HSPC) growth and survival by promoting rRNA transcription in growth conditions and inhibiting translation in response to stress, respectively. Mediates the crosstalk between myeloid and intestinal epithelial cells to protect the intestinal epithelial barrier integrity: secreted by myeloid cells and promotes intestinal epithelial cells proliferation and survival. Also mediates osteoclast-endothelial cell crosstalk in growing bone: produced by osteoclasts and protects the neighboring vascular cells against senescence by promoting rRNA transcription. In Chlorocebus aethiops (Green monkey), this protein is Angiogenin (ANG).